We begin with the raw amino-acid sequence, 59 residues long: Photosystem II reaction center protein K (59 aa).

Residues 1 to 22 constitute a propeptide that is removed on maturation; the sequence is MILYSHLSTLIDIDLSNNIFLA. The chain crosses the membrane as a helical span at residues 30-50; it reads IFDPLVDVMPVIPVFFLLLAF.

Belongs to the PsbK family. As to quaternary structure, PSII is composed of 1 copy each of membrane proteins PsbA, PsbB, PsbC, PsbD, PsbE, PsbF, PsbH, PsbI, PsbJ, PsbK, PsbL, PsbM, PsbT, PsbX, PsbY, PsbZ, Psb30/Ycf12, at least 3 peripheral proteins of the oxygen-evolving complex and a large number of cofactors. It forms dimeric complexes.

The protein localises to the plastid. It is found in the chloroplast thylakoid membrane. One of the components of the core complex of photosystem II (PSII). PSII is a light-driven water:plastoquinone oxidoreductase that uses light energy to abstract electrons from H(2)O, generating O(2) and a proton gradient subsequently used for ATP formation. It consists of a core antenna complex that captures photons, and an electron transfer chain that converts photonic excitation into a charge separation. In Chara vulgaris (Common stonewort), this protein is Photosystem II reaction center protein K.